Reading from the N-terminus, the 103-residue chain is Large ribosomal subunit protein bL21 (103 aa).

A compositionally biased stretch (basic residues) spans 83–92; the sequence is YRRKKGHRQP. The disordered stretch occupies residues 83–103; it reads YRRKKGHRQPFSRVTVEKIEA.

The protein belongs to the bacterial ribosomal protein bL21 family. In terms of assembly, part of the 50S ribosomal subunit. Contacts protein L20.

Its function is as follows. This protein binds to 23S rRNA in the presence of protein L20. This chain is Large ribosomal subunit protein bL21, found in Pelotomaculum thermopropionicum (strain DSM 13744 / JCM 10971 / SI).